The primary structure comprises 106 residues: CDGSH iron-sulfur domain-containing protein 1 (106 aa).

At S2 the chain carries N-acetylserine. A helical; Signal-anchor for type III membrane protein membrane pass occupies residues 10–29; that stretch reads EWIAAVTIAAGTAAIGYLAY. Over 30 to 106 the chain is Cytoplasmic; it reads KRFYVKDHRN…GPLIIKKKDT (77 aa). A Glycyl lysine isopeptide (Lys-Gly) (interchain with G-Cter in ubiquitin) cross-link involves residue K40. K53 functions as the Schiff-base intermediate with pyridoxal 5'-phosphate in the catalytic mechanism. An N6-acetyllysine; alternate mark is found at K53 and K66. Residues K53 and K66 each participate in a glycyl lysine isopeptide (Lys-Gly) (interchain with G-Cter in ubiquitin); alternate cross-link. The [2Fe-2S] cluster site is built by C70 and C72. Glycyl lysine isopeptide (Lys-Gly) (interchain with G-Cter in ubiquitin) cross-links involve residues K76 and K77. [2Fe-2S] cluster contacts are provided by C81 and H85. Residues 84-106 form a disordered region; that stretch reads SHTKHNEETGDNVGPLIIKKKDT. K87 is covalently cross-linked (Glycyl lysine isopeptide (Lys-Gly) (interchain with G-Cter in ubiquitin)). Position 102 is an N6-acetyllysine; alternate (K102). K102 is covalently cross-linked (Glycyl lysine isopeptide (Lys-Gly) (interchain with G-Cter in ubiquitin); alternate). Residues K103 and K104 each participate in a glycyl lysine isopeptide (Lys-Gly) (interchain with G-Cter in ubiquitin) cross-link.

The protein belongs to the CISD protein family. In terms of assembly, homodimer. Requires [2Fe-2S] cluster as cofactor. The cofactor is pyridoxal 5'-phosphate. Post-translationally, ubiquitinated by PRKN during mitophagy, leading to its degradation and enhancement of mitophagy. Deubiquitinated by USP30.

The protein localises to the mitochondrion outer membrane. It catalyses the reaction L-cysteine + 2-oxoglutarate = 2-oxo-3-sulfanylpropanoate + L-glutamate. In terms of biological role, L-cysteine transaminase that catalyzes the reversible transfer of the amino group from L-cysteine to the alpha-keto acid 2-oxoglutarate to respectively form 2-oxo-3-sulfanylpropanoate and L-glutamate. The catalytic cycle occurs in the presence of pyridoxal 5'-phosphate (PLP) cofactor that facilitates transamination by initially forming an internal aldimine with the epsilon-amino group of active site Lys-55 residue on the enzyme (PLP-enzyme aldimine), subsequently displaced by formation of an external aldimine with the substrate amino group (PLP-L-cysteine aldimine). The external aldimine is further deprotonated to form a carbanion intermediate, which in the presence of 2-oxoglutarate regenerates PLP yielding final products 2-oxo-3-sulfanylpropanoate and L-glutamate. The proton transfer in carbanion intermediate is suggested to be controlled by the active site lysine residue, whereas PLP stabilizes carbanion structure through electron delocalization, also known as the electron sink effect. Plays a key role in regulating maximal capacity for electron transport and oxidative phosphorylation. May be involved in iron-sulfur cluster shuttling and/or in redox reactions. Can transfer the [2Fe-2S] cluster to an apo-acceptor protein only when in the oxidation state, likely serving as a redox sensor that regulates mitochondrial iron-sulfur cluster assembly and iron trafficking upon oxidative stress. This is CDGSH iron-sulfur domain-containing protein 1 (CISD1) from Bos taurus (Bovine).